A 1320-amino-acid polypeptide reads, in one-letter code: Transcriptional activator MN1 (1320 aa).

Met-1 carries the N-acetylmethionine modification. Disordered regions lie at residues 1-26 (MFGL…FNET), 92-121 (FGGQ…FGGP), 147-219 (PPFA…SLEP), 231-411 (LEYN…EYPI), 423-442 (SEPV…NQRL), 474-615 (NGSM…AGRL), 629-819 (SAWF…KDNL), 840-1150 (GAPN…PDEI), and 1247-1273 (PWEK…SASQ). Over residues 98 to 113 (HHGHPGSHHPHQHHPH) the composition is skewed to basic residues. Low complexity-rich tracts occupy residues 202-214 (SFHG…GSDS) and 291-309 (QPPQ…QQQQ). The segment covering 338–366 (MQPPQQAPPPPQQQPPQQPPQQQPPPPPG) has biased composition (pro residues). Residues 498 to 514 (FTPPVPDSFPSGPPLQH) are compositionally biased toward pro residues. Composition is skewed to low complexity over residues 523–550 (QQQQ…QQQQ) and 564–578 (RNQQ…LAQL). Composition is skewed to gly residues over residues 582 to 596 (GDVG…GPVG) and 701 to 710 (QFGGSLGGLG). The segment covering 759–768 (SGPGVNSPPS) has biased composition (low complexity). Over residues 769–784 (AGGGGGSSGGGGGGGA) the composition is skewed to gly residues. Low complexity-rich tracts occupy residues 798-809 (SASKLGALSLGS) and 895-905 (GTSSSGSKASG). Residues 914–930 (DGTSLSPNYTLESTSGN) show a composition bias toward polar residues. Residues Ser-950 and Ser-954 each carry the phosphoserine modification. Over residues 973–984 (GVSPGQQQASGA) the composition is skewed to low complexity. Ser-1007 is modified (phosphoserine). Polar residues predominate over residues 1048–1066 (EVSTSYANEDEVSSSSDNP). Ser-1081 is modified (phosphoserine). Over residues 1118–1128 (YGGGGGPGHPG) the composition is skewed to gly residues.

In terms of assembly, interacts with PBX1, PKNOX1, ZBTB24, E2F7, RING1. In terms of tissue distribution, widely expressed in fetal and adult tissues. Highest expression is observed in fetal brain and skeletal muscle, and adult skeletal muscle.

It is found in the nucleus. Transcriptional activator which specifically regulates expression of TBX22 in the posterior region of the developing palate. Required during later stages of palate development for growth and medial fusion of the palatal shelves. Promotes maturation and normal function of calvarial osteoblasts, including expression of the osteoclastogenic cytokine TNFSF11/RANKL. Necessary for normal development of the membranous bones of the skull. May play a role in tumor suppression. The sequence is that of Transcriptional activator MN1 (MN1) from Homo sapiens (Human).